The chain runs to 42 residues: Thymosin beta-10 (42 aa).

Composition is skewed to basic and acidic residues over residues 1 to 25 and 33 to 42; these read MADK…ETQE and ETIEQEKQAK. The disordered stretch occupies residues 1-42; sequence MADKPDLGEINSFDKAKLKKTETQEKNTLPTKETIEQEKQAK. A2 carries the N-acetylalanine modification. The residue at position 4 (K4) is an N6-acetyllysine. A Phosphoserine modification is found at S12. Position 15 is an N6-acetyllysine (K15). Phosphothreonine is present on residues T21, T23, and T34. Position 39 is an N6-acetyllysine (K39).

This sequence belongs to the thymosin beta family. Distributed in numerous types of tissues, including thymus, spleen, lung, liver and muscle.

The protein localises to the cytoplasm. The protein resides in the cytoskeleton. In terms of biological role, plays an important role in the organization of the cytoskeleton. Binds to and sequesters actin monomers (G actin) and therefore inhibits actin polymerization. This Bos taurus (Bovine) protein is Thymosin beta-10 (TMSB10).